The sequence spans 424 residues: O-methyltransferase bfoD (424 aa).

S-adenosyl-L-methionine is bound at residue D275. Catalysis depends on H326, which acts as the Proton acceptor.

Belongs to the class I-like SAM-binding methyltransferase superfamily. Cation-independent O-methyltransferase family.

The protein operates within secondary metabolite biosynthesis. Cytochrome P450 monooxygenase; part of the gene cluster that mediates the biosynthesis of bifonsecin B, a dimeric gamma-naphthopyrone. The first step in the biosynthesis of bifonsecin B is the production of gamma-naphthopyrone precursor YWA1 by the non-reducing polyketide synthase albA, via condensation of one acetyl-CoA starter unit with 6 malonyl-CoA units. YWA1 is then methylated by bfoE at position C-6 to yield foncesin which is further methylated at position C-8 by bfoD to produce fonsecin B. A key enzyme in the biosynthetic pathway is the cytochrome P450 monooxygenase bfoB which catalyzes the oxidative dimerization of fonsecin B to bifonsecin B. Bfob also catalyzes the oxidative dimerization of rubrofusarin B into nigerone. The stereoselectivity of bfoB is influenced by the two natural monomeric substrates; homodimerization of fonsecin B yields a stereochemically pure biaryl, M-foncerine B, while rubrofusarin B yields a mixture of enantiomers M- and P-nigerone. This chain is O-methyltransferase bfoD, found in Aspergillus brasiliensis (strain CBS 101740 / IMI 381727 / IBT 21946).